Reading from the N-terminus, the 400-residue chain is Lysophospholipid transporter LplT (400 aa).

The next 12 helical transmembrane spans lie at 19–39, 53–73, 91–111, 139–159, 164–184, 195–213, 227–247, 257–277, 281–301, 304–324, 352–372, and 373–393; these read VIVAQFLSAFGDNALLFATLA, VLQMVFVGAYILFAPFVGQIA, AGAAGICLGVNPFVGYTLVGI, LMEASTIAAILLGSVAGGVLA, IAALVACALAYAGAVAANLFI, SWRLSAMTRSFFCACVVLW, LFWGAGVTLRFLLVLWVPVAL, YLNAMVAVGIVVGAGAAAKLV, TVSRCMPAGILIGVVVAIFSL, ALLPAYALLLLIGMLGGFFVV, NSAMLLMLGLYSLAVLVGVPA, and VAIGIGFGVLFALAIAALWIW.

The protein belongs to the major facilitator superfamily. LplT (TC 2.A.1.42) family.

It is found in the cell inner membrane. Functionally, catalyzes the facilitated diffusion of 2-acyl-glycero-3-phosphoethanolamine (2-acyl-GPE) into the cell. The polypeptide is Lysophospholipid transporter LplT (Salmonella typhi).